A 494-amino-acid polypeptide reads, in one-letter code: 3-octaprenyl-4-hydroxybenzoate carboxy-lyase (494 aa).

Residue N172 participates in Mn(2+) binding. Prenylated FMN-binding positions include 175-177 (IYR), 189-191 (RWL), and 194-195 (RG). E238 serves as a coordination point for Mn(2+). Catalysis depends on D294, which acts as the Proton donor.

It belongs to the UbiD family. As to quaternary structure, homohexamer. Requires prenylated FMN as cofactor. Mn(2+) serves as cofactor.

The protein resides in the cell membrane. It catalyses the reaction a 4-hydroxy-3-(all-trans-polyprenyl)benzoate + H(+) = a 2-(all-trans-polyprenyl)phenol + CO2. It functions in the pathway cofactor biosynthesis; ubiquinone biosynthesis. Functionally, catalyzes the decarboxylation of 3-octaprenyl-4-hydroxy benzoate to 2-octaprenylphenol, an intermediate step in ubiquinone biosynthesis. The chain is 3-octaprenyl-4-hydroxybenzoate carboxy-lyase from Janthinobacterium sp. (strain Marseille) (Minibacterium massiliensis).